The following is a 367-amino-acid chain: Dual-specificity RNA methyltransferase RlmN (367 aa).

Glu-93 functions as the Proton acceptor in the catalytic mechanism. One can recognise a Radical SAM core domain in the interval 99 to 333 (EEDRATLCVS…VIVRKTRGDD (235 aa)). Cysteines 106 and 338 form a disulfide. Positions 113, 117, and 120 each coordinate [4Fe-4S] cluster. Residues 162 to 163 (GE), Ser-194, 216 to 218 (SLH), and Asn-295 contribute to the S-adenosyl-L-methionine site. Residue Cys-338 is the S-methylcysteine intermediate of the active site.

Belongs to the radical SAM superfamily. RlmN family. The cofactor is [4Fe-4S] cluster.

It is found in the cytoplasm. The catalysed reaction is adenosine(2503) in 23S rRNA + 2 reduced [2Fe-2S]-[ferredoxin] + 2 S-adenosyl-L-methionine = 2-methyladenosine(2503) in 23S rRNA + 5'-deoxyadenosine + L-methionine + 2 oxidized [2Fe-2S]-[ferredoxin] + S-adenosyl-L-homocysteine. It catalyses the reaction adenosine(37) in tRNA + 2 reduced [2Fe-2S]-[ferredoxin] + 2 S-adenosyl-L-methionine = 2-methyladenosine(37) in tRNA + 5'-deoxyadenosine + L-methionine + 2 oxidized [2Fe-2S]-[ferredoxin] + S-adenosyl-L-homocysteine. Functionally, specifically methylates position 2 of adenine 2503 in 23S rRNA and position 2 of adenine 37 in tRNAs. m2A2503 modification seems to play a crucial role in the proofreading step occurring at the peptidyl transferase center and thus would serve to optimize ribosomal fidelity. This is Dual-specificity RNA methyltransferase RlmN from Aeromonas hydrophila subsp. hydrophila (strain ATCC 7966 / DSM 30187 / BCRC 13018 / CCUG 14551 / JCM 1027 / KCTC 2358 / NCIMB 9240 / NCTC 8049).